Here is an 810-residue protein sequence, read N- to C-terminus: Transmembrane GTPase Marf (810 aa).

Topologically, residues 1 to 637 (MAAYLNRTIS…TTTPVEATPV (637 aa)) are cytoplasmic. Phosphothreonine is present on T8. The interval 13 to 40 (TGQTGPADDDRHASSTDTVDKSGPGSPL) is disordered. Over residues 20 to 32 (DDDRHASSTDTVD) the composition is skewed to basic and acidic residues. Residue S38 is modified to Phosphoserine. Residues 134–382 (QRDHMKVAFF…IRYFEFQDFE (249 aa)) form the Dynamin-type G domain. The segment at 144–151 (GRTSNGKS) is G1 motif. 147–152 (SNGKSS) lines the GTP pocket. The segment at 170–171 (TT) is G2 motif. Residues 239 to 242 (DSPG) are G3 motif. 298-301 (NRWD) serves as a coordination point for GTP. Positions 298-301 (NRWD) are G4 motif. K327 is a region of interest (G5 motif). S345 serves as a coordination point for GTP. Residues 427-476 (RNLKQDQKNLLTERIQGTETQMMQVTREMKMKIHNMVEEVEEKVSKALNE) adopt a coiled-coil conformation. Position 553 is a phosphothreonine (T553). S554 is modified (phosphoserine). Phosphothreonine is present on T555. A disordered region spans residues 609-630 (GQPALVNRQSSIGHSVSTPTTT). The chain crosses the membrane as a helical span at residues 638–648 (CLLPAPVVAGI). Residues 649–668 (TPEQLSLISRFAVSSIGSQG) lie on the Mitochondrial intermembrane side of the membrane. A helical transmembrane segment spans residues 669 to 689 (TVGGLVVAGVMLKTIGWRVLV). At 690 to 810 (GVGALYGCIY…IFEHNYISPQ (121 aa)) the chain is on the cytoplasmic side. Residues 759–806 (TATTDMNDELKTLDSQLNILEANQKQLKLLRNKANYIQNELDIFEHNY) are a coiled coil.

It belongs to the TRAFAC class dynamin-like GTPase superfamily. Dynamin/Fzo/YdjA family. Mitofusin subfamily. In terms of assembly, interacts with Mul1. In terms of processing, ubiquitinated by park and Mul1. Ubiquitinated, probably by HUWE1, when dietary stearate (C18:0) levels are low; ubiquitination inhibits mitochondrial fusion. In terms of tissue distribution, widely expressed in embryos, accumulating in the mesoderm and endoderm during gut development. In the male germ line, it is expressed in spermatogonia, spermatocytes and early spermatids.

It localises to the mitochondrion outer membrane. It catalyses the reaction GTP + H2O = GDP + phosphate + H(+). In terms of biological role, mitochondrial outer membrane GTPase that mediates mitochondrial clustering and fusion. Mitochondrial fusion is the physical merging of mitochondria that gives rise to mitochondrial networks, and this process is counterbalanced by mitochondrial fission which fragments networks. Promotes, but is not required for park recruitment to dysfunctional mitochondria. In Drosophila melanogaster (Fruit fly), this protein is Transmembrane GTPase Marf (Marf).